Here is a 151-residue protein sequence, read N- to C-terminus: Troponin C, isoallergen Bla g 6.0101 (151 aa).

4 consecutive EF-hand domains span residues 7–42 (EQIQ…LGHR), 43–78 (LDDD…FLVE), 83–118 (AMQQ…LDDK), and 119–151 (ITAE…MTGE). Ca(2+)-binding residues include D56, D58, S60, E62, and E67. Residues D132, D134, S136, T138, and E143 each contribute to the Ca(2+) site.

It belongs to the troponin C family.

In terms of biological role, troponin is the central regulatory protein of striated muscle contraction. It consists of three components: Troponin-I (Tn-I) which is the inhibitor of actomyosin ATPase, Troponin-T (Tn-T) which contains the binding site for tropomyosin and Troponin-C (Tn-C). The binding of calcium to Tn-C abolishes the inhibitory action of Tn on actin filaments. The sequence is that of Troponin C, isoallergen Bla g 6.0101 from Blattella germanica (German cockroach).